The primary structure comprises 545 residues: RNA-directed RNA polymerase beta chain (545 aa).

The 131-residue stretch at 243 to 373 (RLAQQGSRDG…PNLRKTFTSG (131 aa)) folds into the RdRp catalytic domain.

In terms of assembly, part of the viral RNA-dependent RNA polymerase complex, the other subunits are probably the host ribosomal protein S1, EF-Tu and EF-Ts.

The enzyme catalyses RNA(n) + a ribonucleoside 5'-triphosphate = RNA(n+1) + diphosphate. This is the catalytic subunit of the viral RNA-dependent RNA polymerase complex. This complex is involved in viral RNA replication that produces (+)-stranded genomes via a complementary, (-)-stranded intermediate. This Enterobacteria phage fr (Bacteriophage fr) protein is RNA-directed RNA polymerase beta chain.